The sequence spans 675 residues: NADH-ubiquinone oxidoreductase 75 kDa subunit (675 aa).

In terms of domain architecture, 2Fe-2S ferredoxin-type spans Lys2 to Lys80. The [2Fe-2S] cluster site is built by Cys36, Cys47, Cys50, and Cys64. The region spanning Lys80–Gly119 is the 4Fe-4S His(Cys)3-ligated-type domain. The [4Fe-4S] cluster site is built by His96, Cys100, Cys103, Cys109, Cys148, Cys151, Cys154, and Cys198. Residues Leu217–Arg273 enclose the 4Fe-4S Mo/W bis-MGD-type domain.

The protein belongs to the complex I 75 kDa subunit family. Complex I is composed of about 30 different subunits. The cofactor is [2Fe-2S] cluster. [4Fe-4S] cluster serves as cofactor.

It localises to the mitochondrion inner membrane. The catalysed reaction is a ubiquinone + NADH + 5 H(+)(in) = a ubiquinol + NAD(+) + 4 H(+)(out). Functionally, core subunit of the mitochondrial membrane respiratory chain NADH dehydrogenase (Complex I) that is believed to belong to the minimal assembly required for catalysis. Complex I functions in the transfer of electrons from NADH to the respiratory chain. The immediate electron acceptor for the enzyme is believed to be ubiquinone. This is the largest subunit of complex I and it is a component of the iron-sulfur (IP) fragment of the enzyme. It may form part of the active site crevice where NADH is oxidized. The protein is NADH-ubiquinone oxidoreductase 75 kDa subunit (NAD11) of Acanthamoeba castellanii (Amoeba).